The following is a 227-amino-acid chain: 2-C-methyl-D-erythritol 4-phosphate cytidylyltransferase (227 aa).

Belongs to the IspD/TarI cytidylyltransferase family. IspD subfamily.

It catalyses the reaction 2-C-methyl-D-erythritol 4-phosphate + CTP + H(+) = 4-CDP-2-C-methyl-D-erythritol + diphosphate. The protein operates within isoprenoid biosynthesis; isopentenyl diphosphate biosynthesis via DXP pathway; isopentenyl diphosphate from 1-deoxy-D-xylulose 5-phosphate: step 2/6. Its function is as follows. Catalyzes the formation of 4-diphosphocytidyl-2-C-methyl-D-erythritol from CTP and 2-C-methyl-D-erythritol 4-phosphate (MEP). This chain is 2-C-methyl-D-erythritol 4-phosphate cytidylyltransferase, found in Caldanaerobacter subterraneus subsp. tengcongensis (strain DSM 15242 / JCM 11007 / NBRC 100824 / MB4) (Thermoanaerobacter tengcongensis).